A 196-amino-acid polypeptide reads, in one-letter code: Orotate phosphoribosyltransferase (196 aa).

117–125 (EDVVTTGLS) serves as a coordination point for 5-phospho-alpha-D-ribose 1-diphosphate. Residues Thr-121 and Arg-149 each coordinate orotate.

This sequence belongs to the purine/pyrimidine phosphoribosyltransferase family. PyrE subfamily. Homodimer. Mg(2+) serves as cofactor.

It catalyses the reaction orotidine 5'-phosphate + diphosphate = orotate + 5-phospho-alpha-D-ribose 1-diphosphate. It functions in the pathway pyrimidine metabolism; UMP biosynthesis via de novo pathway; UMP from orotate: step 1/2. Functionally, catalyzes the transfer of a ribosyl phosphate group from 5-phosphoribose 1-diphosphate to orotate, leading to the formation of orotidine monophosphate (OMP). The protein is Orotate phosphoribosyltransferase of Sphingopyxis alaskensis (strain DSM 13593 / LMG 18877 / RB2256) (Sphingomonas alaskensis).